The primary structure comprises 979 residues: UPF0182 protein MT0070 (979 aa).

The next 7 helical transmembrane spans lie at leucine 19–valine 41, leucine 63–tyrosine 85, leucine 114–valine 136, tryptophan 174–leucine 196, alanine 208–leucine 230, leucine 261–leucine 280, and isoleucine 285–leucine 307. The tract at residues valine 894–alanine 948 is disordered. Positions alanine 913–proline 946 are enriched in pro residues.

It belongs to the UPF0182 family.

The protein resides in the cell membrane. The sequence is that of UPF0182 protein MT0070 from Mycobacterium tuberculosis (strain CDC 1551 / Oshkosh).